The chain runs to 152 residues: Deoxyuridine 5'-triphosphate nucleotidohydrolase (152 aa).

Substrate contacts are provided by residues 72-74, N85, and 89-91; these read RSG and TVD.

Belongs to the dUTPase family. Mg(2+) is required as a cofactor.

The enzyme catalyses dUTP + H2O = dUMP + diphosphate + H(+). Its pathway is pyrimidine metabolism; dUMP biosynthesis; dUMP from dCTP (dUTP route): step 2/2. Its function is as follows. This enzyme is involved in nucleotide metabolism: it produces dUMP, the immediate precursor of thymidine nucleotides and it decreases the intracellular concentration of dUTP so that uracil cannot be incorporated into DNA. The chain is Deoxyuridine 5'-triphosphate nucleotidohydrolase from Nitrobacter hamburgensis (strain DSM 10229 / NCIMB 13809 / X14).